The primary structure comprises 248 residues: ATP synthase subunit a (248 aa).

A propeptide spans 1 to 3 (MLY) (removed in mature form). The next 7 membrane-spanning stretches (helical) occupy residues 24-44 (MSLT…FFIF), 86-106 (IYMP…LVGL), 117-137 (FALP…IGFV), 146-166 (VLLP…VELL), 183-203 (ITSG…TSGI), 205-225 (LLFV…ELIV), and 227-247 (ILQA…SLIL).

It belongs to the ATPase A chain family. As to quaternary structure, F-type ATPases have 2 components, CF(1) - the catalytic core - and CF(0) - the membrane proton channel. CF(1) has five subunits: alpha(3), beta(3), gamma(1), delta(1), epsilon(1). CF(0) has three main subunits: a, b and c.

It is found in the mitochondrion inner membrane. In terms of biological role, mitochondrial membrane ATP synthase (F(1)F(0) ATP synthase or Complex V) produces ATP from ADP in the presence of a proton gradient across the membrane which is generated by electron transport complexes of the respiratory chain. F-type ATPases consist of two structural domains, F(1) - containing the extramembraneous catalytic core and F(0) - containing the membrane proton channel, linked together by a central stalk and a peripheral stalk. During catalysis, ATP synthesis in the catalytic domain of F(1) is coupled via a rotary mechanism of the central stalk subunits to proton translocation. Key component of the proton channel; it may play a direct role in the translocation of protons across the membrane. The protein is ATP synthase subunit a of Zancudomyces culisetae (Gut fungus).